We begin with the raw amino-acid sequence, 465 residues long: Adenosylhomocysteinase (465 aa).

Threonine 56, aspartate 131, and glutamate 191 together coordinate substrate. 192–194 lines the NAD(+) pocket; it reads TTT. 2 residues coordinate substrate: lysine 221 and aspartate 225. NAD(+)-binding positions include asparagine 226, 255–260, glutamate 278, asparagine 313, 334–336, and asparagine 379; these read GYGDVG and IGH.

It belongs to the adenosylhomocysteinase family. The cofactor is NAD(+).

It localises to the cytoplasm. The enzyme catalyses S-adenosyl-L-homocysteine + H2O = L-homocysteine + adenosine. It functions in the pathway amino-acid biosynthesis; L-homocysteine biosynthesis; L-homocysteine from S-adenosyl-L-homocysteine: step 1/1. Its function is as follows. May play a key role in the regulation of the intracellular concentration of adenosylhomocysteine. The chain is Adenosylhomocysteinase from Bartonella henselae (strain ATCC 49882 / DSM 28221 / CCUG 30454 / Houston 1) (Rochalimaea henselae).